The chain runs to 1091 residues: Self-sufficient cytochrome P450 monooxygenase CYP505E1 (1091 aa).

C433 is a heme binding site. The region spanning 528–669 (ICFFYGSNSG…DLEAWEETSL (142 aa)) is the Flavodoxin-like domain. FMN is bound by residues 534 to 538 (SNSGT) and 613 to 645 (VFGCGHHDWTQTFYRIPTLIDELMHKAGATRLA). The region spanning 707 to 935 (KDLMEARVTT…RPAKEAFHLP (229 aa)) is the FAD-binding FR-type domain.

The protein in the N-terminal section; belongs to the cytochrome P450 family. Requires FAD as cofactor. It depends on FMN as a cofactor. Heme is required as a cofactor.

It carries out the reaction 2 oxidized [cytochrome P450] + NADPH = 2 reduced [cytochrome P450] + NADP(+) + H(+). The enzyme catalyses an organic molecule + reduced [NADPH--hemoprotein reductase] + O2 = an alcohol + oxidized [NADPH--hemoprotein reductase] + H2O + H(+). The catalysed reaction is dodecanoate + reduced [NADPH--hemoprotein reductase] + O2 = 5-hydroxydodecanoate + oxidized [NADPH--hemoprotein reductase] + H2O + H(+). It catalyses the reaction tetradecanoate + reduced [NADPH--hemoprotein reductase] + O2 = 7-hydroxytetradecanoate + oxidized [NADPH--hemoprotein reductase] + H2O + H(+). It carries out the reaction dodecan-1-ol + reduced [NADPH--hemoprotein reductase] + O2 = 1,5-dodecanediol + oxidized [NADPH--hemoprotein reductase] + H2O + H(+). The enzyme catalyses dodecan-1-ol + reduced [NADPH--hemoprotein reductase] + O2 = 1,4-dodecanediol + oxidized [NADPH--hemoprotein reductase] + H2O + H(+). The catalysed reaction is dodecan-1-ol + reduced [NADPH--hemoprotein reductase] + O2 = 1,6-dodecanediol + oxidized [NADPH--hemoprotein reductase] + H2O + H(+). Functionally, self-sufficient cytochrome P450 monooxygenase that catalyzes the regioselective in-chain hydroxylation of alkanes, fatty alcohols, and fatty acids at the omega-7 position. Performs hydroxylation of C10-C16 n-alkanes and C12 and C14 fatty alcohols; and thereby enables the one step biocatalytic synthesis of rare alcohols such as 5-dodecanol and 7-tetradecanol. Converts 1-dodecanol into 1,5-dodecanediol as major product with very little sub-terminally hydroxylated products with the 1,4-dodecanediol and 1,6-dodecanediol more abundant. Converts dodecanoic acid to 5-hydroxydodecanoic acid which can be further converted into delta-dodecalactone by lactonization of the 5-hydroxy acid at low pH. Also gives sub-terminal hydroxylation of dodecanoic acid with 9-hydroxydodecanoic acid being the second most abundant product. The polypeptide is Self-sufficient cytochrome P450 monooxygenase CYP505E1 (Aspergillus niger (strain ATCC MYA-4892 / CBS 513.88 / FGSC A1513)).